The sequence spans 126 residues: Nascent polypeptide-associated complex protein (126 aa).

The NAC-A/B domain maps to 10–77 (PRMMKQMQKM…AKKVAKAEEK (68 aa)).

This sequence belongs to the NAC-alpha family. Homodimer. Interacts with the ribosome. Binds ribosomal RNA.

Functionally, contacts the emerging nascent chain on the ribosome. This is Nascent polypeptide-associated complex protein from Methanococcus maripaludis (strain C6 / ATCC BAA-1332).